The following is a 358-amino-acid chain: Mitogen-activated protein kinase hog-1 (358 aa).

The 280-residue stretch at 20 to 299 (YSDLQPVGMG…ATEALSHEYL (280 aa)) folds into the Protein kinase domain. ATP is bound by residues 26–34 (VGMGAFGLV) and K49. Residue D141 is the Proton acceptor of the active site. At T171 the chain carries Phosphothreonine. The TXY signature appears at 171-173 (TGY). Y173 carries the phosphotyrosine modification.

This sequence belongs to the protein kinase superfamily. Ser/Thr protein kinase family. MAP kinase subfamily. HOG1 sub-subfamily. Mg(2+) serves as cofactor. Dually phosphorylated on Thr-171 and Tyr-173, which activates the enzyme. Phosphorylation is induced by fungicides and osmotic stress.

The protein localises to the cytoplasm. It is found in the nucleus. It carries out the reaction L-seryl-[protein] + ATP = O-phospho-L-seryl-[protein] + ADP + H(+). It catalyses the reaction L-threonyl-[protein] + ATP = O-phospho-L-threonyl-[protein] + ADP + H(+). Activated by tyrosine and threonine phosphorylation. In terms of biological role, proline-directed serine/threonine-protein kinase involved in a signal transduction pathway that is activated by changes in the osmolarity of the extracellular environment. Controls osmotic regulation of transcription of target genes. Involved in ion flux-mediated turgor regulation. This Neurospora crassa (strain ATCC 24698 / 74-OR23-1A / CBS 708.71 / DSM 1257 / FGSC 987) protein is Mitogen-activated protein kinase hog-1 (hog-1).